The primary structure comprises 284 residues: MGLIIKGKPVADAISETLIKEVDNFKIQGIIPKLVIIRVGAKASDLAYEKGILKRCNGIGIETYVKEFPEDISQREFIRELRRLNEDRNVDGIMVFRPLPKHLDENIIKYVITPEKDIDCFNPINLAKVIAGDSTGFAPCTPRAVMEILKYYNIDVEGKFSVVIGRSMIVGKPMSMLLLNENSTVTTCHSKTVHLDKICSQADILVAGIGKAEFIDSKYIKEGAVVIDVGINVDKYGKLCGDVDIKSCQWKNVIVTPVPGGVGTVTSSVLAQHVVEACKHKNKL.

NADP(+) is bound by residues 165-167, serine 190, and isoleucine 231; that span reads GRS.

Belongs to the tetrahydrofolate dehydrogenase/cyclohydrolase family. In terms of assembly, homodimer.

It carries out the reaction (6R)-5,10-methylene-5,6,7,8-tetrahydrofolate + NADP(+) = (6R)-5,10-methenyltetrahydrofolate + NADPH. The enzyme catalyses (6R)-5,10-methenyltetrahydrofolate + H2O = (6R)-10-formyltetrahydrofolate + H(+). It functions in the pathway one-carbon metabolism; tetrahydrofolate interconversion. Catalyzes the oxidation of 5,10-methylenetetrahydrofolate to 5,10-methenyltetrahydrofolate and then the hydrolysis of 5,10-methenyltetrahydrofolate to 10-formyltetrahydrofolate. In Clostridium kluyveri (strain ATCC 8527 / DSM 555 / NBRC 12016 / NCIMB 10680 / K1), this protein is Bifunctional protein FolD.